We begin with the raw amino-acid sequence, 252 residues long: 3-dehydroquinate dehydratase (252 aa).

Residues serine 21, 46–48 (EWR), and arginine 82 contribute to the 3-dehydroquinate site. Histidine 143 serves as the catalytic Proton donor/acceptor. The active-site Schiff-base intermediate with substrate is the lysine 170. 3-dehydroquinate is bound by residues arginine 213, serine 232, and glutamine 236.

This sequence belongs to the type-I 3-dehydroquinase family. In terms of assembly, homodimer.

The catalysed reaction is 3-dehydroquinate = 3-dehydroshikimate + H2O. It participates in metabolic intermediate biosynthesis; chorismate biosynthesis; chorismate from D-erythrose 4-phosphate and phosphoenolpyruvate: step 3/7. Its function is as follows. Involved in the third step of the chorismate pathway, which leads to the biosynthesis of aromatic amino acids. Catalyzes the cis-dehydration of 3-dehydroquinate (DHQ) and introduces the first double bond of the aromatic ring to yield 3-dehydroshikimate. The chain is 3-dehydroquinate dehydratase from Escherichia coli O8 (strain IAI1).